The following is a 564-amino-acid chain: Proline--tRNA ligase 1 (564 aa).

This sequence belongs to the class-II aminoacyl-tRNA synthetase family. ProS type 1 subfamily. In terms of assembly, homodimer.

It localises to the cytoplasm. The catalysed reaction is tRNA(Pro) + L-proline + ATP = L-prolyl-tRNA(Pro) + AMP + diphosphate. Catalyzes the attachment of proline to tRNA(Pro) in a two-step reaction: proline is first activated by ATP to form Pro-AMP and then transferred to the acceptor end of tRNA(Pro). As ProRS can inadvertently accommodate and process non-cognate amino acids such as alanine and cysteine, to avoid such errors it has two additional distinct editing activities against alanine. One activity is designated as 'pretransfer' editing and involves the tRNA(Pro)-independent hydrolysis of activated Ala-AMP. The other activity is designated 'posttransfer' editing and involves deacylation of mischarged Ala-tRNA(Pro). The misacylated Cys-tRNA(Pro) is not edited by ProRS. This chain is Proline--tRNA ligase 1, found in Streptomyces avermitilis (strain ATCC 31267 / DSM 46492 / JCM 5070 / NBRC 14893 / NCIMB 12804 / NRRL 8165 / MA-4680).